A 303-amino-acid polypeptide reads, in one-letter code: MKVAVLLGGTSSERPVSLVSGEAAIEALREKGHDVTPIDVGPDIATTIASLKAAAPDVVFNALHGPRGEDGAIQGVLEWLGLPYTHSGIRASAVAMDKGATRILLAAAGLPVAQGRVVTVEELAEADPLPAPYVIKPVAEGSSVGVEIVRTGDNRRAEIARTWRFGKEALVESFIPGRELTAGVMGDRALAVTDILPSETAAFYDFEAKYKAGGSRHVVPAELPQAVTDRALDYALRAHQTLGCQGASRTDFRYDEGTDTLVILEVNTQPGMTPTSLLPEQAAYCGISYPELCDWMVREALAR.

The region spanning 102–298 is the ATP-grasp domain; it reads RILLAAAGLP…YPELCDWMVR (197 aa). 128 to 181 is a binding site for ATP; the sequence is PLPAPYVIKPVAEGSSVGVEIVRTGDNRRAEIARTWRFGKEALVESFIPGRELT. 3 residues coordinate Mg(2+): Asp251, Glu265, and Asn267.

This sequence belongs to the D-alanine--D-alanine ligase family. The cofactor is Mg(2+). It depends on Mn(2+) as a cofactor.

It localises to the cytoplasm. It catalyses the reaction 2 D-alanine + ATP = D-alanyl-D-alanine + ADP + phosphate + H(+). Its pathway is cell wall biogenesis; peptidoglycan biosynthesis. Its function is as follows. Cell wall formation. The polypeptide is D-alanine--D-alanine ligase (Gluconobacter oxydans (strain 621H) (Gluconobacter suboxydans)).